The chain runs to 328 residues: Arabinose 5-phosphate isomerase KdsD (328 aa).

One can recognise an SIS domain in the interval 42 to 184 (CEKMFWCKGK…AVALLKARGF (143 aa)). Substrate contacts are provided by residues 75-76 (GT), His82, His88, 114-123 (ALIPVLKRLH), 148-150 (KVA), Thr222, and Asp275. Residue His82 coordinates Zn(2+). The CBS 1 domain occupies 210–268 (MHTGDEIPHVKKTASLRDALLEVTRKNLGMTVICDDNMMIEGIFTDGDLRRVFDMGVDV). Residues 277–328 (MTPGGIRVRPGILAVEALNLMQSRHITSVMVADGDHLLGVLHMHDLLRAGVV) enclose the CBS 2 domain.

This sequence belongs to the SIS family. GutQ/KpsF subfamily. Homotetramer.

The catalysed reaction is D-arabinose 5-phosphate = D-ribulose 5-phosphate. It functions in the pathway carbohydrate biosynthesis; 3-deoxy-D-manno-octulosonate biosynthesis; 3-deoxy-D-manno-octulosonate from D-ribulose 5-phosphate: step 1/3. Its pathway is bacterial outer membrane biogenesis; lipopolysaccharide biosynthesis. Its function is as follows. Involved in the biosynthesis of 3-deoxy-D-manno-octulosonate (KDO), a unique 8-carbon sugar component of lipopolysaccharides (LPSs). Catalyzes the reversible aldol-ketol isomerization between D-ribulose 5-phosphate (Ru5P) and D-arabinose 5-phosphate (A5P). The sequence is that of Arabinose 5-phosphate isomerase KdsD (kdsD) from Shigella flexneri.